Reading from the N-terminus, the 35-residue chain is Tau/kappa-theraphotoxin-Pc1a (35 aa).

Disulfide bonds link Cys-3/Cys-17, Cys-10/Cys-22, and Cys-16/Cys-29. Phenylalanine amide is present on Phe-35.

The protein belongs to the neurotoxin 10 (Hwtx-1) family. 62 (Vatx) subfamily. As to expression, expressed by the venom gland.

Its subcellular location is the secreted. In terms of biological role, selectively activates mammalian TRPV1, the capsaicin receptor, a non-selective cation channel expressed by sensory neurons of the pain pathway. Is less potent than VaTx2 and VaTx3. Interacts with distinct regions of the channel than capsaicin, since it only acts on the extracellular face of the channel, and capsaicin binds to the cytosolic side. Also activates avian TRPV1, which is insensitive to capsaicin. Significantly inhibits potassium channels Kv2.1/KCNB1. The chain is Tau/kappa-theraphotoxin-Pc1a from Psalmopoeus cambridgei (Trinidad chevron tarantula).